The primary structure comprises 306 residues: MAGRYDSNPFEEDDVNPFSEQARGKAGGQPSYGGGAFYMPNPRNVPSMSSNSRLSPLPPEPAAFGATVDIPLDSSKDLKNREKELQAREAELNKREKELKRREEAAARAGIVIEEKNWPPFLPLIHHDITNEIPSHLQRMQYVAFASFLGLACCLFWNVIAVTSAWVKGEGVKIWLLAIIYFISGVPGAYVLWYRPLYNAMRTDSALKFGLFFLVYLFHILFCVFSAVAPPVVFEGKSLAGILPAIDLISKNALVGIFYFVGFGLFCVESLLSIWVIQQVYMYFRGSGKAAEMKRDATRGAMRAAF.

A disordered region spans residues 1–60 (MAGRYDSNPFEEDDVNPFSEQARGKAGGQPSYGGGAFYMPNPRNVPSMSSNSRLSPLPPE). At 1–141 (MAGRYDSNPF…EIPSHLQRMQ (141 aa)) the chain is on the cytoplasmic side. A compositionally biased stretch (gly residues) spans 25–36 (KAGGQPSYGGGA). The segment covering 44–54 (NVPSMSSNSRL) has biased composition (polar residues). Residues 72–109 (LDSSKDLKNREKELQAREAELNKREKELKRREEAAARA) adopt a coiled-coil conformation. A run of 4 helical transmembrane segments spans residues 142 to 162 (YVAFASFLGLACCLFWNVIAV), 174 to 194 (IWLLAIIYFISGVPGAYVLWY), 209 to 229 (FGLFFLVYLFHILFCVFSAVA), and 257 to 277 (IFYFVGFGLFCVESLLSIWVI). Topologically, residues 278–306 (QQVYMYFRGSGKAAEMKRDATRGAMRAAF) are cytoplasmic.

The protein belongs to the SCAMP family.

The protein resides in the cell membrane. The protein localises to the cytoplasmic vesicle. It is found in the secretory vesicle membrane. In terms of biological role, probably involved in membrane trafficking. The protein is Putative secretory carrier-associated membrane protein 1 (SCAMP1) of Oryza sativa subsp. indica (Rice).